An 859-amino-acid polypeptide reads, in one-letter code: MTAIDPQGLEKHTPMMRQYLTLKAQHPDMLLFYRMGDFYELFYEDAKRASELLGISLTARGKSGGDPIPMAGLPYHAVEGYLAKLVQLRVSVAICEQIGDPATSKGPVERKVVRIVTPGTLTDEALLQERQDNLLAALYQGKTGYGYATLDVASGRFVITELANTEALEAELQRTNPAELLYSEDFSEMSLIAAINGTRRRPEWEFDYDTCHRLLLNQFGTKDLKGFGIEDARLSLQAAGCLMQYVKDTQRTALPHINSIVRFNQSDSIVLDAATRRNLELTVNLQGGRENTLASVLDNTVTPMGSRMLQRWLHQPLRDHDIIRARQVSIEELLGNANYEILSEDLKAIGDIERITTRIALRNARPRDFARLRQALALLPQLQQTLTQAAAPHLKYLSQVIGEFPDELELLSRAVVDNPPMLIRDGGVIREGYNEELDQWRKLSEGATDYLHELEAREKQQTGISTLKVGYNRVHGYYIEVSRRESDLVPLSYQRRQTLKNTERYIIPELKEHEEKVLSSQGRALALEKQLWEQLFDLILPKLHELQDFARASAELDVLCNFAERAESLNYHCPDLSTAPGIQIEAGRHPVVEQVSQSPFIANPVTLNNERKMLIVTGPNMGGKSTYMRQVALITLMAHIGCYVPAEHAVIGPVDRIFTRIGASDDLASGRSTFMVEMTETANILHNATPNSLVLMDEIGRGTSTYDGLSLAWSAAEYLAKHLQAMTLFATHYFELTQLPELLSNVENVHLDAVEHGDSIVFMHAVQEGAASRSYGLQVAALAGVPNCVISAAKHKLHQLESRDHGKESCDAQQPLQQSISFSAPTPSPALEALAKLNPDELTPRQALDYLYNLKKLAL.

Gly618–Ser625 contacts ATP.

The protein belongs to the DNA mismatch repair MutS family.

Its function is as follows. This protein is involved in the repair of mismatches in DNA. It is possible that it carries out the mismatch recognition step. This protein has a weak ATPase activity. The chain is DNA mismatch repair protein MutS from Shewanella halifaxensis (strain HAW-EB4).